Here is a 228-residue protein sequence, read N- to C-terminus: 3,4-dihydroxy-2-butanone 4-phosphate synthase (228 aa).

D-ribulose 5-phosphate is bound by residues R37–E38, D42, R150–T154, and E174. E38 lines the Mg(2+) pocket. H153 serves as a coordination point for Mg(2+).

This sequence belongs to the DHBP synthase family. As to quaternary structure, homodimer. Requires Mg(2+) as cofactor. Mn(2+) is required as a cofactor.

The catalysed reaction is D-ribulose 5-phosphate = (2S)-2-hydroxy-3-oxobutyl phosphate + formate + H(+). It participates in cofactor biosynthesis; riboflavin biosynthesis; 2-hydroxy-3-oxobutyl phosphate from D-ribulose 5-phosphate: step 1/1. In terms of biological role, catalyzes the conversion of D-ribulose 5-phosphate to formate and 3,4-dihydroxy-2-butanone 4-phosphate. The chain is 3,4-dihydroxy-2-butanone 4-phosphate synthase from Chloroherpeton thalassium (strain ATCC 35110 / GB-78).